The primary structure comprises 162 residues: Lectin BRA-3 (162 aa).

Residues 1-24 form the signal peptide; that stretch reads MQRSEIVQAVTLLVVVFAITTAEC. Residues 25–152 form the C-type lectin domain; the sequence is TCPGNLDWQE…NKNKNFLCKM (128 aa). 3 cysteine pairs are disulfide-bonded: Cys26–Cys39, Cys56–Cys150, and Cys125–Cys142.

In terms of assembly, homotetramer; disulfide-linked. In terms of tissue distribution, coelemic fluid.

Functionally, sugar-binding protein which recognizes specific carbohydrate structures and agglutinates a variety of animal cells by binding to cell-surface glycoproteins and glycolipids. Calcium-dependent lectin. Invertebrate lectins may be involved in defense functions. This is Lectin BRA-3 from Megabalanus rosa (Acorn barnacle).